The chain runs to 223 residues: Octanoyltransferase (223 aa).

The 185-residue stretch at 30–214 (DLDRDCFLLT…IVADLFGEFT (185 aa)) folds into the BPL/LPL catalytic domain. Substrate-binding positions include 75 to 82 (RGGEITYH), 144 to 146 (SIG), and 157 to 159 (GFA). Residue cysteine 175 is the Acyl-thioester intermediate of the active site.

This sequence belongs to the LipB family.

It localises to the cytoplasm. It catalyses the reaction octanoyl-[ACP] + L-lysyl-[protein] = N(6)-octanoyl-L-lysyl-[protein] + holo-[ACP] + H(+). Its pathway is protein modification; protein lipoylation via endogenous pathway; protein N(6)-(lipoyl)lysine from octanoyl-[acyl-carrier-protein]: step 1/2. In terms of biological role, catalyzes the transfer of endogenously produced octanoic acid from octanoyl-acyl-carrier-protein onto the lipoyl domains of lipoate-dependent enzymes. Lipoyl-ACP can also act as a substrate although octanoyl-ACP is likely to be the physiological substrate. This Desulfotalea psychrophila (strain LSv54 / DSM 12343) protein is Octanoyltransferase.